We begin with the raw amino-acid sequence, 382 residues long: Na(+)/H(+) antiporter NhaA (382 aa).

11 helical membrane passes run 13–33, 58–78, 94–114, 124–144, 153–173, 179–199, 204–224, 256–276, 285–305, 325–345, and 357–377; these read IGGILLFIAAVIAIIIANSPF, LLLWINDGLMAIYFLLIGLEI, LVPALTALAGLIFPALIFIFF, GWAIPTATDIAFTLGIVSLLG, ILLTAIAIFDDIAAIVIIALF, SLLSLSLALVFTLILIGLNYF, ISVFMLFGVALWIAVLKSGVH, VVFLILPLFAFANAGVSFVGL, VVLGIGLGLFLGKQLGIFLSL, VYGIALICGVGFTMSLFIGSL, and MVKIGVVLGSFIAGLTGFLVL.

It belongs to the NhaA Na(+)/H(+) (TC 2.A.33) antiporter family.

It is found in the cell inner membrane. The catalysed reaction is Na(+)(in) + 2 H(+)(out) = Na(+)(out) + 2 H(+)(in). Na(+)/H(+) antiporter that extrudes sodium in exchange for external protons. The sequence is that of Na(+)/H(+) antiporter NhaA from Legionella pneumophila (strain Paris).